The primary structure comprises 920 residues: B3 domain-containing protein REM17 (920 aa).

DNA-binding regions (TF-B3) lie at residues 12–105, 153–250, and 267–361; these read NPHF…LGPS, RFVA…CRAK, and CFEG…LCPT. Disordered stretches follow at residues 405-438, 540-562, and 585-614; these read DDDQ…SSFV, LACS…KNTS, and DDDQ…SSDH. A compositionally biased stretch (basic and acidic residues) spans 423–432; the sequence is NPREKVESSS. Positions 436 to 531 form a DNA-binding region, TF-B3 4; the sequence is SFVGSVNPSS…NKPVLSLCPT (96 aa). 2 DNA-binding regions (TF-B3) span residues 616 to 714 and 727 to 823; these read SFVA…SLSE and YFVG…LCPA. Residues 842–852 are compositionally biased toward low complexity; it reads NSLSSNPSSGD. Positions 842-870 are disordered; the sequence is NSLSSNPSSGDDSSRSEESEEENMEDKNI.

The protein localises to the nucleus. The polypeptide is B3 domain-containing protein REM17 (REM17) (Arabidopsis thaliana (Mouse-ear cress)).